Consider the following 307-residue polypeptide: Protoheme IX farnesyltransferase (307 aa).

9 helical membrane-spanning segments follow: residues Val28–Val48, Trp50–Ile70, Ile100–Asn120, Leu122–Leu142, Asn149–Ala169, Ala176–Leu196, Phe218–Phe238, Ser243–Trp263, and Ile282–Pro302.

It belongs to the UbiA prenyltransferase family. Protoheme IX farnesyltransferase subfamily.

It localises to the cell inner membrane. It carries out the reaction heme b + (2E,6E)-farnesyl diphosphate + H2O = Fe(II)-heme o + diphosphate. It functions in the pathway porphyrin-containing compound metabolism; heme O biosynthesis; heme O from protoheme: step 1/1. Its function is as follows. Converts heme B (protoheme IX) to heme O by substitution of the vinyl group on carbon 2 of heme B porphyrin ring with a hydroxyethyl farnesyl side group. The protein is Protoheme IX farnesyltransferase of Ralstonia nicotianae (strain ATCC BAA-1114 / GMI1000) (Ralstonia solanacearum).